The sequence spans 180 residues: uncharacterized protein (180 aa).

This is an uncharacterized protein from Magallana gigas (Pacific oyster).